The following is a 415-amino-acid chain: Serine hydroxymethyltransferase (415 aa).

(6S)-5,6,7,8-tetrahydrofolate-binding positions include Leu117 and Gly121–Leu123. Lys226 bears the N6-(pyridoxal phosphate)lysine mark.

It belongs to the SHMT family. Homodimer. The cofactor is pyridoxal 5'-phosphate.

It localises to the cytoplasm. It carries out the reaction (6R)-5,10-methylene-5,6,7,8-tetrahydrofolate + glycine + H2O = (6S)-5,6,7,8-tetrahydrofolate + L-serine. Its pathway is one-carbon metabolism; tetrahydrofolate interconversion. The protein operates within amino-acid biosynthesis; glycine biosynthesis; glycine from L-serine: step 1/1. Catalyzes the reversible interconversion of serine and glycine with tetrahydrofolate (THF) serving as the one-carbon carrier. This reaction serves as the major source of one-carbon groups required for the biosynthesis of purines, thymidylate, methionine, and other important biomolecules. Also exhibits THF-independent aldolase activity toward beta-hydroxyamino acids, producing glycine and aldehydes, via a retro-aldol mechanism. In Leptospira interrogans serogroup Icterohaemorrhagiae serovar copenhageni (strain Fiocruz L1-130), this protein is Serine hydroxymethyltransferase.